Here is a 490-residue protein sequence, read N- to C-terminus: Allantoin permease (490 aa).

A run of 12 helical transmembrane segments spans residues 36 to 56 (IWMG…LIAI), 60 to 80 (PWQV…ALAL), 116 to 136 (AIMW…ILLL), 151 to 171 (ILGI…IHLL), 190 to 210 (LVYL…GGLG), 225 to 245 (TFWP…TLIL), 265 to 285 (FYGL…VTSG), 308 to 328 (YVIV…NVAA), 350 to 370 (GSFI…MESA), 373 to 393 (VYAF…VMMA), 425 to 445 (AFAA…VPVL), and 448 to 468 (LYDI…IVLM).

It belongs to the purine-cytosine permease (2.A.39) family.

The protein localises to the cell membrane. The enzyme catalyses (S)-allantoin(in) + H(+)(in) = (S)-allantoin(out) + H(+)(out). Its function is as follows. Uptake of allantoin into the cell. Allantoin uptake is not dependent on sodium, and PucI is likely to be a proton-coupled symporter. Shows highest recognition for binding of allantoin, good recognition for binding of hydantoin, L-5-benzylhydantoin and 5-hydroxyhydantoin, and to a lesser extent for a range of nucleobases and nucleosides. This is Allantoin permease from Bacillus subtilis (strain 168).